Reading from the N-terminus, the 126-residue chain is Glycine cleavage system H protein (126 aa).

The Lipoyl-binding domain occupies 22–104; the sequence is KAYIGITSFA…YEQAWMIVVE (83 aa). Position 63 is an N6-lipoyllysine (K63).

Belongs to the GcvH family. In terms of assembly, the glycine cleavage system is composed of four proteins: P, T, L and H. The cofactor is (R)-lipoate.

Functionally, the glycine cleavage system catalyzes the degradation of glycine. The H protein shuttles the methylamine group of glycine from the P protein to the T protein. Its function is as follows. Is also involved in protein lipoylation via its role as an octanoyl/lipoyl carrier protein intermediate. This Brevibacillus brevis (strain 47 / JCM 6285 / NBRC 100599) protein is Glycine cleavage system H protein.